Reading from the N-terminus, the 362-residue chain is 3-isopropylmalate dehydrogenase (362 aa).

75–88 (GPKWANLPPTEQPE) lines the NAD(+) pocket. The substrate site is built by R96, R106, R135, and D224. Residues D224, D248, and D252 each coordinate Mg(2+). 282–294 (GSAPDIAGLGVAN) is a binding site for NAD(+).

It belongs to the isocitrate and isopropylmalate dehydrogenases family. LeuB type 1 subfamily. Homodimer. It depends on Mg(2+) as a cofactor. The cofactor is Mn(2+).

It localises to the cytoplasm. It carries out the reaction (2R,3S)-3-isopropylmalate + NAD(+) = 4-methyl-2-oxopentanoate + CO2 + NADH. It participates in amino-acid biosynthesis; L-leucine biosynthesis; L-leucine from 3-methyl-2-oxobutanoate: step 3/4. Catalyzes the oxidation of 3-carboxy-2-hydroxy-4-methylpentanoate (3-isopropylmalate) to 3-carboxy-4-methyl-2-oxopentanoate. The product decarboxylates to 4-methyl-2 oxopentanoate. The chain is 3-isopropylmalate dehydrogenase from Colwellia psychrerythraea (strain 34H / ATCC BAA-681) (Vibrio psychroerythus).